A 349-amino-acid chain; its full sequence is MARFSVCGGDDGEGPSNNNHQSRKRQRLPSIDENEEDAETSDAGSSGEEDEDETQNQGMRPESEDRGSTSDDSDREVVIEERRFGKFVNSQSSSSSKDSPLSVTLLDPDVLDCPICCEPLKIPIFQCDNGHLACTLCCTKVRNRCPSCTLPIGYVRCRAMEKVIEASRVSCLNAKYGCKESTSYGNRFSHEQVCVFTPCSCPILDCHYTGYYKDLNNHVRAEHKDDLISFVWNTRLTISLDLNKKTTILQEENDGHVIVVQVFRALHAVYVSVSCIAPLTPGVGRLSCRLAKITVDSLLKQGFMVKNIQKVTNEHPEDGFMLIPSYLFSGNDNLNLQIWIGHGRIFVHS.

Positions 1–77 (MARFSVCGGD…STSDDSDREV (77 aa)) are disordered. The RING-type; degenerate zinc finger occupies 113 to 149 (CPICCEPLKIPIFQCDNGHLACTLCCTKVRNRCPSCT). The tract at residues 163–344 (VIEASRVSCL…NLQIWIGHGR (182 aa)) is SBD. The SIAH-type zinc finger occupies 166-224 (ASRVSCLNAKYGCKESTSYGNRFSHEQVCVFTPCSCPILDCHYTGYYKDLNNHVRAEHK). Zn(2+) is bound by residues C171, C178, H190, C194, C201, C206, H218, and H223.

The protein belongs to the SINA (Seven in absentia) family.

It carries out the reaction S-ubiquitinyl-[E2 ubiquitin-conjugating enzyme]-L-cysteine + [acceptor protein]-L-lysine = [E2 ubiquitin-conjugating enzyme]-L-cysteine + N(6)-ubiquitinyl-[acceptor protein]-L-lysine.. It functions in the pathway protein modification; protein ubiquitination. Its function is as follows. E3 ubiquitin-protein ligase that mediates ubiquitination and subsequent proteasomal degradation of target proteins. E3 ubiquitin ligases accept ubiquitin from an E2 ubiquitin-conjugating enzyme in the form of a thioester and then directly transfers the ubiquitin to targeted substrates. It probably triggers the ubiquitin-mediated degradation of different substrates. This is E3 ubiquitin-protein ligase SINA-like 10 from Arabidopsis thaliana (Mouse-ear cress).